The chain runs to 144 residues: Putative lipoprotein MAH_0816 (144 aa).

The N-terminal stretch at 1–24 is a signal peptide; the sequence is MRWPMQNRTTAVIAVALATTALVA. Cysteine 25 is lipidated: N-palmitoyl cysteine. A lipid anchor (S-diacylglycerol cysteine) is attached at cysteine 25.

This sequence belongs to the mycobacterial 19 kDa antigen family.

It is found in the cell membrane. The chain is Putative lipoprotein MAH_0816 from Mycobacterium avium subsp. hominissuis (strain TH135).